A 329-amino-acid chain; its full sequence is T-lymphocyte activation antigen CD86 (329 aa).

A signal peptide spans 1 to 23 (MDPQCTMGLSNILFVMAFLLSGA). Topologically, residues 24–247 (APLKIQAYFN…DPQPPPDHIP (224 aa)) are extracellular. Asparagine 33, asparagine 47, asparagine 135, asparagine 146, asparagine 154, asparagine 177, asparagine 192, and asparagine 213 each carry an N-linked (GlcNAc...) asparagine glycan. The 99-residue stretch at 33–131 (NETADLPCQF…RIHQMNSELS (99 aa)) folds into the Ig-like V-type domain. A disulfide bridge connects residues cysteine 40 and cysteine 110. The region spanning 150-225 (NVYINLTCSS…IFCILETDKT (76 aa)) is the Ig-like C2-type domain. A disulfide bond links cysteine 157 and cysteine 218. A helical transmembrane segment spans residues 248–268 (WITAVLPTVIICVMVFCLILW). At 269-329 (KWKKKKRPRN…SSCDKSDTCF (61 aa)) the chain is on the cytoplasmic side. Residues 277-329 (RNSYKCGTNTMEREESEQTKKREKIHIPERSDEAQRVFKSSKTSSCDKSDTCF) are disordered. A compositionally biased stretch (basic and acidic residues) spans 287-312 (MEREESEQTKKREKIHIPERSDEAQR).

Homodimer. Interacts with MARCH8. Interacts (via cytoplasmic domain) with PHB1 and PHB2; the interactions increases after priming with CD40. Interacts with CD28. In terms of assembly, (Microbial infection) Interacts with adenovirus subgroup b fiber protein. As to quaternary structure, (Microbial infection) Interacts with Orthopoxvirus OPG038/M2 protein, inhibiting the interaction with CTLA4 and CD28. In terms of processing, polyubiquitinated; which is promoted by MARCH8 and results in endocytosis and lysosomal degradation. Expressed by activated B-lymphocytes and monocytes.

The protein resides in the cell membrane. In terms of biological role, receptor involved in the costimulatory signal essential for T-lymphocyte proliferation and interleukin-2 production, by binding CD28 or CTLA-4. May play a critical role in the early events of T-cell activation and costimulation of naive T-cells, such as deciding between immunity and anergy that is made by T-cells within 24 hours after activation. Also involved in the regulation of B cells function, plays a role in regulating the level of IgG(1) produced. Upon CD40 engagement, activates NF-kappa-B signaling pathway via phospholipase C and protein kinase C activation. Its function is as follows. Interferes with the formation of CD86 clusters, and thus acts as a negative regulator of T-cell activation. Functionally, (Microbial infection) Acts as a receptor for adenovirus subgroup B. The polypeptide is T-lymphocyte activation antigen CD86 (CD86) (Homo sapiens (Human)).